We begin with the raw amino-acid sequence, 332 residues long: 2,3-diketo-L-gulonate reductase (332 aa).

The active-site Proton donor is the histidine 44. NAD(+)-binding positions include isoleucine 168–serine 174, tryptophan 224–lysine 225, and glycine 304–glutamate 306.

This sequence belongs to the LDH2/MDH2 oxidoreductase family. DlgD subfamily. In terms of assembly, homodimer.

The protein localises to the cytoplasm. The catalysed reaction is 3-dehydro-L-gulonate + NAD(+) = 2,3-dioxo-L-gulonate + NADH + H(+). It carries out the reaction 3-dehydro-L-gulonate + NADP(+) = 2,3-dioxo-L-gulonate + NADPH + H(+). Its function is as follows. Catalyzes the reduction of 2,3-diketo-L-gulonate in the presence of NADH, to form 3-keto-L-gulonate. This is 2,3-diketo-L-gulonate reductase from Haemophilus influenzae (strain ATCC 51907 / DSM 11121 / KW20 / Rd).